The chain runs to 352 residues: Phosphate acyltransferase (352 aa).

A compositionally biased stretch (basic and acidic residues) spans 328–339; the sequence is ESFPGDAREREG. Residues 328 to 352 are disordered; sequence ESFPGDAREREGAQAPDAGTERVAS.

This sequence belongs to the PlsX family. Homodimer. Probably interacts with PlsY.

It localises to the cytoplasm. It catalyses the reaction a fatty acyl-[ACP] + phosphate = an acyl phosphate + holo-[ACP]. The protein operates within lipid metabolism; phospholipid metabolism. Its function is as follows. Catalyzes the reversible formation of acyl-phosphate (acyl-PO(4)) from acyl-[acyl-carrier-protein] (acyl-ACP). This enzyme utilizes acyl-ACP as fatty acyl donor, but not acyl-CoA. This Geobacter sp. (strain M21) protein is Phosphate acyltransferase.